Reading from the N-terminus, the 339-residue chain is Ectoine/5-hydroxyectoine-binding periplasmic protein UehA (339 aa).

Residues 1 to 20 (MAQSITFTFGAVAAAGIALA) form the signal peptide. L-ectoine contacts are provided by E36, R171, N211, F215, and F236. C162 and C303 are disulfide-bonded.

It belongs to the bacterial solute-binding protein 7 family. As to quaternary structure, monomer. The complex comprises the extracytoplasmic solute receptor protein UehA, and the two transmembrane proteins UehB and UehC.

It localises to the periplasm. In terms of biological role, part of the tripartite ATP-independent periplasmic (TRAP) transport system UehABC, which imports both ectoine and 5-hydroxyectoine as nutrients, and not as osmoprotectants. UehA binds both ectoine and 5-hydroxyectoine with high specificity and affinity. The protein is Ectoine/5-hydroxyectoine-binding periplasmic protein UehA of Ruegeria pomeroyi (strain ATCC 700808 / DSM 15171 / DSS-3) (Silicibacter pomeroyi).